Consider the following 369-residue polypeptide: Glutamate 5-kinase (369 aa).

Lys-14 contributes to the ATP binding site. Substrate contacts are provided by Ser-56, Asp-143, and Asn-155. Residues Ser-175–Asp-176 and Thr-215–Lys-221 contribute to the ATP site. In terms of domain architecture, PUA spans Ala-277 to Gly-351.

It belongs to the glutamate 5-kinase family.

Its subcellular location is the cytoplasm. It catalyses the reaction L-glutamate + ATP = L-glutamyl 5-phosphate + ADP. It functions in the pathway amino-acid biosynthesis; L-proline biosynthesis; L-glutamate 5-semialdehyde from L-glutamate: step 1/2. Its function is as follows. Catalyzes the transfer of a phosphate group to glutamate to form L-glutamate 5-phosphate. This Corynebacterium glutamicum (strain ATCC 13032 / DSM 20300 / JCM 1318 / BCRC 11384 / CCUG 27702 / LMG 3730 / NBRC 12168 / NCIMB 10025 / NRRL B-2784 / 534) protein is Glutamate 5-kinase.